The chain runs to 342 residues: Biotin synthase (342 aa).

One can recognise a Radical SAM core domain in the interval 38 to 262 (GQVQISTLLS…MMPTSYVRLS (225 aa)). 3 residues coordinate [4Fe-4S] cluster: Cys-53, Cys-57, and Cys-60. The [2Fe-2S] cluster site is built by Cys-97, Cys-128, Cys-188, and Arg-260.

This sequence belongs to the radical SAM superfamily. Biotin synthase family. In terms of assembly, homodimer. [4Fe-4S] cluster serves as cofactor. Requires [2Fe-2S] cluster as cofactor.

The catalysed reaction is (4R,5S)-dethiobiotin + (sulfur carrier)-SH + 2 reduced [2Fe-2S]-[ferredoxin] + 2 S-adenosyl-L-methionine = (sulfur carrier)-H + biotin + 2 5'-deoxyadenosine + 2 L-methionine + 2 oxidized [2Fe-2S]-[ferredoxin]. Its pathway is cofactor biosynthesis; biotin biosynthesis; biotin from 7,8-diaminononanoate: step 2/2. Functionally, catalyzes the conversion of dethiobiotin (DTB) to biotin by the insertion of a sulfur atom into dethiobiotin via a radical-based mechanism. This chain is Biotin synthase, found in Baumannia cicadellinicola subsp. Homalodisca coagulata.